Reading from the N-terminus, the 247-residue chain is Uridylate kinase (247 aa).

Residue 21-24 coordinates ATP; that stretch reads KVSG. Residue Gly63 participates in UMP binding. ATP contacts are provided by Gly64 and Arg68. Residues Asp83 and 144-151 contribute to the UMP site; that span reads TGNPFCTT. ATP-binding residues include Thr171, Gln172, Tyr177, and Asp180.

It belongs to the UMP kinase family. Homohexamer.

It localises to the cytoplasm. The enzyme catalyses UMP + ATP = UDP + ADP. It functions in the pathway pyrimidine metabolism; CTP biosynthesis via de novo pathway; UDP from UMP (UMPK route): step 1/1. Inhibited by UTP. Catalyzes the reversible phosphorylation of UMP to UDP. This chain is Uridylate kinase, found in Rickettsia rickettsii (strain Sheila Smith).